A 444-amino-acid polypeptide reads, in one-letter code: MQHRDEILTPSQLNTLARDLLESAFPLVWIEGELGNVSRPSSGHLYVTLKDAQAQVRCAMFKPKSQWLTFQPREGLRVLARGRLTLYEARGDYQIVLDHLEESGEGALRRAFEQLRIRLEAEGLFDPARKQPLPVHPRRIAVITSPSGAVIRDILSVLMRRFPLVEIELLPSLVQGDTAAAQITHLLGGADSSGRYDAILIARGGGSLEDLWAFNNEQLARTIAAAHTPVISAIGHETDFTLADFAADIRAPTPSVAAELLVPDQRALRQHLGQLQQRLLHLQQHRLDQAIQRADQLGLRLQARNPEMHLRLLAQRQAEAGRRLQQCLHHVLDRAQGQLRNHHTRLYALNPRQQIAGLQKHLKHLNPQQPLQRRLQQEQLRLHGLVRALEAVNPLATVARGYALVRRADNNTLVRDSAQVCVGDVLDTKLAHGQLRVRVEISST.

This sequence belongs to the XseA family. As to quaternary structure, heterooligomer composed of large and small subunits.

The protein localises to the cytoplasm. It catalyses the reaction Exonucleolytic cleavage in either 5'- to 3'- or 3'- to 5'-direction to yield nucleoside 5'-phosphates.. Bidirectionally degrades single-stranded DNA into large acid-insoluble oligonucleotides, which are then degraded further into small acid-soluble oligonucleotides. The chain is Exodeoxyribonuclease 7 large subunit from Xylella fastidiosa (strain M23).